Consider the following 364-residue polypeptide: Chorismate synthase (364 aa).

Arg-47 serves as a coordination point for NADP(+). Residues 125 to 127 (RFS), Gly-285, 300 to 304 (KPTPS), and Arg-327 contribute to the FMN site.

Belongs to the chorismate synthase family. In terms of assembly, homotetramer. It depends on FMNH2 as a cofactor.

The catalysed reaction is 5-O-(1-carboxyvinyl)-3-phosphoshikimate = chorismate + phosphate. It functions in the pathway metabolic intermediate biosynthesis; chorismate biosynthesis; chorismate from D-erythrose 4-phosphate and phosphoenolpyruvate: step 7/7. Its function is as follows. Catalyzes the anti-1,4-elimination of the C-3 phosphate and the C-6 proR hydrogen from 5-enolpyruvylshikimate-3-phosphate (EPSP) to yield chorismate, which is the branch point compound that serves as the starting substrate for the three terminal pathways of aromatic amino acid biosynthesis. This reaction introduces a second double bond into the aromatic ring system. The chain is Chorismate synthase from Dehalococcoides mccartyi (strain ATCC BAA-2100 / JCM 16839 / KCTC 5957 / BAV1).